We begin with the raw amino-acid sequence, 69 residues long: Double-strand break reduction protein (69 aa).

Its function is as follows. Helps to maintain the integrity of the chromosome by lowering the steady-state level of double strand breaks. This region of DNA acts as an antitoxin to toxin RalR, a DNase, but it seems to be sRNA RalA that has the antitoxin activity and not this putative protein. Therefore the identity of this as a protein-coding gene has been cast into doubt. This chain is Double-strand break reduction protein, found in Escherichia coli (strain K12).